A 357-amino-acid polypeptide reads, in one-letter code: CD4+ T-cell-stimulating antigen (357 aa).

Positions 1 to 22 (MKKRTFALALSMIIASGVILGA) are cleaved as a signal peptide. Cys23 is lipidated: N-palmitoyl cysteine. The S-diacylglycerol cysteine moiety is linked to residue Cys23.

This sequence belongs to the BMP lipoprotein family.

It is found in the cell membrane. The protein is CD4+ T-cell-stimulating antigen (tcsA) of Listeria monocytogenes serovar 1/2a (strain ATCC BAA-679 / EGD-e).